A 112-amino-acid polypeptide reads, in one-letter code: 2Fe-2S ferredoxin (112 aa).

Residues 1–104 (MPQIVILPHA…DLVVEIPKYT (104 aa)) form the 2Fe-2S ferredoxin-type domain. Positions 42, 48, 51, and 87 each coordinate [2Fe-2S] cluster.

The protein belongs to the adrenodoxin/putidaredoxin family. [2Fe-2S] cluster serves as cofactor.

Its function is as follows. Ferredoxin are iron-sulfur proteins that transfer electrons in a wide variety of metabolic reactions. The chain is 2Fe-2S ferredoxin (fdx) from Pseudomonas aeruginosa (strain ATCC 15692 / DSM 22644 / CIP 104116 / JCM 14847 / LMG 12228 / 1C / PRS 101 / PAO1).